The chain runs to 708 residues: Retrotransposon-derived protein PEG10 (708 aa).

Residues 1 to 50 (MTERRRDELSEEINNLREKVMKQSEENNNLQSQVQKLTEENTTLREQVEP) are a coiled coil. The tract at residues 21 to 74 (MKQSEENNNLQSQVQKLTEENTTLREQVEPTPEDEDDDIELRGAAAAAAPPPPI) is disordered. Residues 26–36 (ENNNLQSQVQK) show a composition bias toward polar residues. A compositionally biased stretch (basic and acidic residues) spans 37–48 (LTEENTTLREQV). Positions 76–275 (EECPEDLPEK…HQVDPTEPVG (200 aa)) are necessary for interaction with ACVRL1. A CCHC-type zinc finger spans residues 293–310 (NLCLYCGTGGHYADNCPA). The interval 310–344 (AKASKSSPAGKLPGPAVEGPSATGPEIIRSPQDDA) is disordered. Glycyl lysine isopeptide (Lys-Gly) (interchain with G-Cter in ubiquitin) cross-links involve residues Lys-311 and Lys-314. Residues Ser-316 and Leu-321 each carry the phosphoserine modification. Residues Arg-507, Arg-598, and Arg-611 each carry the omega-N-methylarginine modification. The interval 683–708 (PVPQYPPPQPPPPPPPPPPPPSYSTL) is disordered.

Homooligomer; homooligomerizes into virion-like capsids. Interacts with ACVRL1. Interacts with SIAH1 and SIAH2. Post-translationally, undergoes proteolytic cleavage. As to expression, expressed in the cytotrophoblast layer but not in the overlying syncytiotrophoblast of the placenta. Expressed in prostate and breast carcinomas but not in normal breast and prostate epithelial cells. Expressed in the Hep-G2 cell line (at protein level). Expressed in brain, liver, spleen, kidney, thymus, lung, ovary, testis, reactive lymph node, skeletal muscle, adipose tissue and placenta. Expressed in pancreatic and hepatocellular carcinomas (HCC).

The protein resides in the extracellular vesicle membrane. Its subcellular location is the cytoplasm. The protein localises to the nucleus. Functionally, retrotransposon-derived protein that binds its own mRNA and self-assembles into virion-like capsids. Forms virion-like extracellular vesicles that encapsulate their own mRNA and are released from cells, enabling intercellular transfer of PEG10 mRNA. Binds its own mRNA in the 5'-UTR region, in the region near the boundary between the nucleocapsid (NC) and protease (PRO) coding sequences and in the beginning of the 3'-UTR region. Involved in placenta formation: required for trophoblast stem cells differentiation. Involved at the immediate early stage of adipocyte differentiation. Overexpressed in many cancers and enhances tumor progression: promotes cell proliferation by driving cell cycle progression from G0/G1. Enhances cancer progression by inhibiting the TGF-beta signaling, possibly via interaction with the TGF-beta receptor ACVRL1. May bind to the 5'-GCCTGTCTTT-3' DNA sequence of the MB1 domain in the myelin basic protein (MBP) promoter; additional evidences are however required to confirm this result. In Homo sapiens (Human), this protein is Retrotransposon-derived protein PEG10.